Consider the following 429-residue polypeptide: DNA polymerase delta small subunit (429 aa).

This sequence belongs to the DNA polymerase delta/II small subunit family. Heterodimer with subunits of 125 kDa and 50 kDa.

The protein localises to the nucleus. The enzyme catalyses DNA(n) + a 2'-deoxyribonucleoside 5'-triphosphate = DNA(n+1) + diphosphate. In terms of biological role, the function of the small subunit is not yet clear. This chain is DNA polymerase delta small subunit (POLD2), found in Oryza sativa subsp. japonica (Rice).